The sequence spans 105 residues: Prothymosin alpha-A (105 aa).

The span at 1–30 (MADTKVDTSKEVSAKDLKEKKQVEEAENGK) shows a compositional bias: basic and acidic residues. The segment at 1–105 (MADTKVDTSK…VDPKKQKTDV (105 aa)) is disordered. 2 stretches are compositionally biased toward acidic residues: residues 39–78 (ENEE…EEAE) and 87–96 (EDDDDDEDDV).

Belongs to the pro/parathymosin family. In terms of tissue distribution, at the 20-somite stage (18 hpf), expressed on the dorsal side of the embryo in the developing central and peripheral nervous system (CNS and PNS), in the tail bud and the pronephric ducts. In the PNS, expressed in the otic vesicle, trigeminal ganglion and the anterior lateral line placode. Localized throughout the hindbrain, with highest expression in rhombomeres 3 and 4. In the head, expressed in the olfactory placode and in the diencephalic region. At the end of the segmentation period (20 hpf), expression begins in the newly forming endodermal pouches, and weakly in the pharyngeal arch precursor cells. During the early pharyngula period, expressed in the pectoral fin bud, the developing retina, and still present in the central nervous system and endodermal pouches. In the tail, expressed in the spinal cord and posterior lateral line precursors. Weakly expressed in the pronephric ducts, only in the corpuscles of Stanius. At 48 hpf, still expressed in the retina and brain, where expression is almost uniform. At this stage, expression is decreased in the spinal cord and is absent from the lateral line cells and pronephric ducts, but appears in the intestine and continues in the pharyngeal arches. In 72 hpf embryos, expression in the brain remains uniform but is restricted to amacrine cells in the retina. In the pharyngeal arches, expression continues to be limited to the ectodermal and endodermal covering cells.

The protein resides in the nucleus. The protein is Prothymosin alpha-A (ptmaa) of Danio rerio (Zebrafish).